A 352-amino-acid chain; its full sequence is Phosphoribosylformylglycinamidine cyclo-ligase (352 aa).

It belongs to the AIR synthase family.

It localises to the cytoplasm. The enzyme catalyses 2-formamido-N(1)-(5-O-phospho-beta-D-ribosyl)acetamidine + ATP = 5-amino-1-(5-phospho-beta-D-ribosyl)imidazole + ADP + phosphate + H(+). It functions in the pathway purine metabolism; IMP biosynthesis via de novo pathway; 5-amino-1-(5-phospho-D-ribosyl)imidazole from N(2)-formyl-N(1)-(5-phospho-D-ribosyl)glycinamide: step 2/2. The sequence is that of Phosphoribosylformylglycinamidine cyclo-ligase from Ectopseudomonas mendocina (strain ymp) (Pseudomonas mendocina).